The primary structure comprises 37 residues: Potassium channel toxin alpha-KTx 15.3 (37 aa).

Pyrrolidone carboxylic acid is present on Q1. Disulfide bonds link C8/C28, C13/C33, and C17/C35.

As to expression, expressed by the venom gland.

The protein resides in the secreted. Its function is as follows. Inhibits A-type (Kv4) voltage-gated potassium channels of striated neurons (Ki=131 nM), probably by acting as a pore blocker. Has also been shown to block ERG1/Kv11.1/KCNH2 potassium channels (IC(50)=7.9 uM). The presence of the Kv4-associated proteins DPP6 or DPP10 is mandatory to have high-affinity blockade of Kv4.2/KCND2 and Kv4.3/KCND3 channels (80-90% inhibition at 500 nM of toxin). In contrast, the presence of the Kv4-associated protein KChIP1/KCNIP1 does not enhance the affinity blockade (only 40% inhibition at 500 nM). In adult rat brain, the toxin binds to sites in the striatum, and cerebellum. It shares the same target in rat brain than AaTX1 (AC Q867F4) and BmTX3 (AC Q8I0L5). In DPP6 knockout mice, A-type currents are about 20-fold less affected by the toxin. In rodent models of Parkinson's disease, the toxin reduces motor symptoms and emotional and cognitive symptoms. The protein is Potassium channel toxin alpha-KTx 15.3 of Androctonus mauritanicus mauritanicus (Scorpion).